An 82-amino-acid polypeptide reads, in one-letter code: Turripeptide IX-07 (82 aa).

An N-terminal signal peptide occupies residues 1 to 21 (MGFYMLLTVALLLTSLMNVEA). Positions 22-39 (TPVNQAERSALEKSGLGN) are excised as a propeptide. Cystine bridges form between cysteine 48-cysteine 70, cysteine 55-cysteine 74, and cysteine 60-cysteine 81.

Expressed by the venom duct.

The protein resides in the secreted. This chain is Turripeptide IX-07, found in Gemmula speciosa (Splendid gem-turris).